A 371-amino-acid polypeptide reads, in one-letter code: Prephenate dehydrogenase (371 aa).

The 290-residue stretch at 6–295 (DTILLAGLGL…GLPLRQKGAI (290 aa)) folds into the Prephenate/arogenate dehydrogenase domain. 7–37 (TILLAGLGLIGGSIALAIKKNHPGKRIIGID) is an NAD(+) binding site. The region spanning 300–371 (DLYVDVPDHP…RAEYETFYAD (72 aa)) is the ACT domain.

The protein belongs to the prephenate/arogenate dehydrogenase family.

It carries out the reaction prephenate + NAD(+) = 3-(4-hydroxyphenyl)pyruvate + CO2 + NADH. It participates in amino-acid biosynthesis; L-tyrosine biosynthesis; (4-hydroxyphenyl)pyruvate from prephenate (NAD(+) route): step 1/1. The polypeptide is Prephenate dehydrogenase (tyrA) (Bacillus subtilis (strain 168)).